A 98-amino-acid chain; its full sequence is NADH-ubiquinone oxidoreductase chain 4L (98 aa).

A run of 3 helical transmembrane segments spans residues 1-21 (MTPV…GLAF), 29-49 (ALLC…LWAL), and 58-78 (VAPM…LALL).

The protein belongs to the complex I subunit 4L family.

It is found in the mitochondrion membrane. The catalysed reaction is a ubiquinone + NADH + 5 H(+)(in) = a ubiquinol + NAD(+) + 4 H(+)(out). Core subunit of the mitochondrial membrane respiratory chain NADH dehydrogenase (Complex I) which catalyzes electron transfer from NADH through the respiratory chain, using ubiquinone as an electron acceptor. Part of the enzyme membrane arm which is embedded in the lipid bilayer and involved in proton translocation. The protein is NADH-ubiquinone oxidoreductase chain 4L (MT-ND4L) of Oncorhynchus clarkii (Cutthroat trout).